The following is a 273-amino-acid chain: ATP synthase subunit delta (273 aa).

A disordered region spans residues 55 to 78 (TDPAQSARPRPSSPSVSSAPRSAA). Low complexity predominate over residues 57–78 (PAQSARPRPSSPSVSSAPRSAA).

The protein belongs to the ATPase delta chain family. As to quaternary structure, F-type ATPases have 2 components, F(1) - the catalytic core - and F(0) - the membrane proton channel. F(1) has five subunits: alpha(3), beta(3), gamma(1), delta(1), epsilon(1). F(0) has three main subunits: a(1), b(2) and c(10-14). The alpha and beta chains form an alternating ring which encloses part of the gamma chain. F(1) is attached to F(0) by a central stalk formed by the gamma and epsilon chains, while a peripheral stalk is formed by the delta and b chains.

The protein localises to the cell membrane. In terms of biological role, f(1)F(0) ATP synthase produces ATP from ADP in the presence of a proton or sodium gradient. F-type ATPases consist of two structural domains, F(1) containing the extramembraneous catalytic core and F(0) containing the membrane proton channel, linked together by a central stalk and a peripheral stalk. During catalysis, ATP synthesis in the catalytic domain of F(1) is coupled via a rotary mechanism of the central stalk subunits to proton translocation. Functionally, this protein is part of the stalk that links CF(0) to CF(1). It either transmits conformational changes from CF(0) to CF(1) or is implicated in proton conduction. This is ATP synthase subunit delta from Streptomyces lividans.